A 187-amino-acid polypeptide reads, in one-letter code: UPF0301 protein PC1_3712 (187 aa).

This sequence belongs to the UPF0301 (AlgH) family.

This Pectobacterium carotovorum subsp. carotovorum (strain PC1) protein is UPF0301 protein PC1_3712.